Consider the following 72-residue polypeptide: MSKEDVIEVEGKVLEPLPNAMFLVELSNGHKVLAHVSGKIRMNFIRILPGDRVTVELSPYDLSRGRIVYRFK.

The region spanning 1–72 (MSKEDVIEVE…SRGRIVYRFK (72 aa)) is the S1-like domain.

This sequence belongs to the IF-1 family. As to quaternary structure, component of the 30S ribosomal translation pre-initiation complex which assembles on the 30S ribosome in the order IF-2 and IF-3, IF-1 and N-formylmethionyl-tRNA(fMet); mRNA recruitment can occur at any time during PIC assembly.

Its subcellular location is the cytoplasm. Functionally, one of the essential components for the initiation of protein synthesis. Stabilizes the binding of IF-2 and IF-3 on the 30S subunit to which N-formylmethionyl-tRNA(fMet) subsequently binds. Helps modulate mRNA selection, yielding the 30S pre-initiation complex (PIC). Upon addition of the 50S ribosomal subunit IF-1, IF-2 and IF-3 are released leaving the mature 70S translation initiation complex. This chain is Translation initiation factor IF-1, found in Desulfitobacterium hafniense (strain Y51).